Here is a 206-residue protein sequence, read N- to C-terminus: Large ribosomal subunit protein uL4 (206 aa).

It belongs to the universal ribosomal protein uL4 family. In terms of assembly, part of the 50S ribosomal subunit.

Its function is as follows. One of the primary rRNA binding proteins, this protein initially binds near the 5'-end of the 23S rRNA. It is important during the early stages of 50S assembly. It makes multiple contacts with different domains of the 23S rRNA in the assembled 50S subunit and ribosome. Forms part of the polypeptide exit tunnel. This Jannaschia sp. (strain CCS1) protein is Large ribosomal subunit protein uL4.